The following is a 128-amino-acid chain: uncharacterized protein (128 aa).

The interval 24–43 (KRTQNNTEQASRAINSPLQS) is disordered. Residues 26-43 (TQNNTEQASRAINSPLQS) show a composition bias toward polar residues.

This is an uncharacterized protein from Homo sapiens (Human).